Here is a 344-residue protein sequence, read N- to C-terminus: Trace amine-associated receptor 8b (344 aa).

Topologically, residues 1–33 (MTSNFSQATLQLCYENVNASCIKTPYSPGLRVL) are extracellular. N-linked (GlcNAc...) asparagine glycosylation is found at Asn4 and Asn18. Cystine bridges form between Cys21-Cys185 and Cys104-Cys189. A helical membrane pass occupies residues 34–54 (LYMVFGFGAVLAVCGNLLVVI). Over 55–67 (SVLHFKQLHSPAN) the chain is Cytoplasmic. A helical transmembrane segment spans residues 68-88 (FLIASLASADFLVGISVMPFS). The Extracellular segment spans residues 89–102 (MVRSIESCWYFGDT). The chain crosses the membrane as a helical span at residues 103 to 127 (FCSLHSCCDAAFCYSSLFHLCFISV). Residues 128-146 (DRYIAVTEPLVYPTKFTMS) are Cytoplasmic-facing. A helical membrane pass occupies residues 147–167 (VSGICISISWILPLVYSSAVF). The Extracellular portion of the chain corresponds to 168 to 196 (YTGISATGIENLVSALNCVGGCQVAINQD). A helical membrane pass occupies residues 197–217 (WVLISFLLFFIPTLVMIILYS). Residues 218-256 (KIFLVAKQQAVKIETSISGSKGESSLESHKARVAKRERK) lie on the Cytoplasmic side of the membrane. A helical membrane pass occupies residues 257-277 (AAKTLGVTVMAFMVSWLPYTI). Residues 278-295 (DTLIDAFMGFITPAYVYE) are Extracellular-facing. Residues 296-319 (ICGWIAYYNSAMNPLIYAFFYPWF) traverse the membrane as a helical segment. Residues 320–344 (RKAIKLILSGKILKGHSSTTSLFSE) lie on the Cytoplasmic side of the membrane.

It belongs to the G-protein coupled receptor 1 family.

The protein localises to the cell membrane. Olfactory receptor activated by trace amines. Trace amine compounds are enriched in animal body fluids and act on trace amine-associated receptors (TAARs) to elicit both intraspecific and interspecific innate behaviors. Ligand-binding causes a conformation change that triggers signaling via G(s)-class of G alpha proteins (GNAL or GNAS). This chain is Trace amine-associated receptor 8b, found in Rattus norvegicus (Rat).